Here is a 361-residue protein sequence, read N- to C-terminus: Phospho-N-acetylmuramoyl-pentapeptide-transferase (361 aa).

10 consecutive transmembrane segments (helical) span residues 25–45, 73–93, 98–118, 139–159, 168–188, 200–220, 237–257, 264–284, 289–309, and 339–359; these read RGIL…PAVI, TMGG…WGDL, VWLV…DDWI, IFGL…AAIT, IALP…IVGF, GLAI…AYAS, AGEL…FLWF, VFMG…IAVI, MVLV…IIQV, and VIVR…ATLK.

Belongs to the glycosyltransferase 4 family. MraY subfamily. Mg(2+) serves as cofactor.

It is found in the cell inner membrane. The enzyme catalyses UDP-N-acetyl-alpha-D-muramoyl-L-alanyl-gamma-D-glutamyl-meso-2,6-diaminopimeloyl-D-alanyl-D-alanine + di-trans,octa-cis-undecaprenyl phosphate = di-trans,octa-cis-undecaprenyl diphospho-N-acetyl-alpha-D-muramoyl-L-alanyl-D-glutamyl-meso-2,6-diaminopimeloyl-D-alanyl-D-alanine + UMP. Its pathway is cell wall biogenesis; peptidoglycan biosynthesis. Functionally, catalyzes the initial step of the lipid cycle reactions in the biosynthesis of the cell wall peptidoglycan: transfers peptidoglycan precursor phospho-MurNAc-pentapeptide from UDP-MurNAc-pentapeptide onto the lipid carrier undecaprenyl phosphate, yielding undecaprenyl-pyrophosphoryl-MurNAc-pentapeptide, known as lipid I. This is Phospho-N-acetylmuramoyl-pentapeptide-transferase from Xanthomonas oryzae pv. oryzae (strain MAFF 311018).